Reading from the N-terminus, the 210-residue chain is Imidazole glycerol phosphate synthase subunit HisH (210 aa).

The Glutamine amidotransferase type-1 domain maps to 3–210 (KVALLDYGSG…QLLRNWIDLL (208 aa)). Cys81 serves as the catalytic Nucleophile. Residues His191 and Glu193 contribute to the active site.

As to quaternary structure, heterodimer of HisH and HisF.

The protein resides in the cytoplasm. It catalyses the reaction 5-[(5-phospho-1-deoxy-D-ribulos-1-ylimino)methylamino]-1-(5-phospho-beta-D-ribosyl)imidazole-4-carboxamide + L-glutamine = D-erythro-1-(imidazol-4-yl)glycerol 3-phosphate + 5-amino-1-(5-phospho-beta-D-ribosyl)imidazole-4-carboxamide + L-glutamate + H(+). It carries out the reaction L-glutamine + H2O = L-glutamate + NH4(+). The protein operates within amino-acid biosynthesis; L-histidine biosynthesis; L-histidine from 5-phospho-alpha-D-ribose 1-diphosphate: step 5/9. IGPS catalyzes the conversion of PRFAR and glutamine to IGP, AICAR and glutamate. The HisH subunit catalyzes the hydrolysis of glutamine to glutamate and ammonia as part of the synthesis of IGP and AICAR. The resulting ammonia molecule is channeled to the active site of HisF. The protein is Imidazole glycerol phosphate synthase subunit HisH of Corynebacterium diphtheriae (strain ATCC 700971 / NCTC 13129 / Biotype gravis).